Here is a 383-residue protein sequence, read N- to C-terminus: Putative glutamate--cysteine ligase 2-2 (383 aa).

Belongs to the glutamate--cysteine ligase type 2 family. YbdK subfamily.

It catalyses the reaction L-cysteine + L-glutamate + ATP = gamma-L-glutamyl-L-cysteine + ADP + phosphate + H(+). ATP-dependent carboxylate-amine ligase which exhibits weak glutamate--cysteine ligase activity. The polypeptide is Putative glutamate--cysteine ligase 2-2 (Paenarthrobacter aurescens (strain TC1)).